A 427-amino-acid chain; its full sequence is FAD-dependent monooxygenase OpS4 (427 aa).

An N-terminal signal peptide occupies residues 1-22 (MGSIREPLHLVVIGGGLAGLSA). Glutamate 37 provides a ligand contact to FAD. Residue asparagine 54 is glycosylated (N-linked (GlcNAc...) asparagine). FAD contacts are provided by arginine 112, aspartate 306, and alanine 319.

It belongs to the paxM FAD-dependent monooxygenase family. It depends on FAD as a cofactor.

The protein operates within secondary metabolite biosynthesis. Its function is as follows. FAD-dependent monooxygenase; part of the gene cluster that mediates the biosynthesis of the bibenzoquinone oosporein, a metabolite required for fungal virulence that acts by evading host immunity to facilitate fungal multiplication in insects. The non-reducing polyketide synthase OpS1 produces orsellinic acid by condensing acetyl-CoA with 3 malonyl-CoA units. Orsellinic acid is then hydroxylated to benzenetriol by the hydroxylase OpS4. The intermediate is oxidized either nonenzymatically to 5,5'-dideoxy-oosporein or enzymatically to benzenetetrol by the oxidoreductase OpS7. The latter is further dimerized to oosporein by the catalase OpS5. OpS6 probably functions en route for protecting cells against oxidative stress by scavenging any leaked free radical form of benzenetetrol by activating the thiol group of glutathione. In Beauveria bassiana (strain ARSEF 2860) (White muscardine disease fungus), this protein is FAD-dependent monooxygenase OpS4.